The primary structure comprises 468 residues: Cytochrome P450-like protein L532 (468 aa).

2 helical membrane passes run 22–42 and 172–192; these read WFAY…FGLI and VTVL…GVDV. Heme is bound at residue C415.

It belongs to the cytochrome P450 family. The cofactor is heme.

The protein resides in the host membrane. It is found in the virion. This chain is Cytochrome P450-like protein L532, found in Acanthamoeba polyphaga mimivirus (APMV).